Consider the following 232-residue polypeptide: 7-cyano-7-deazaguanine synthase (232 aa).

7 to 17 (CSGGLDSVSLA) is a binding site for ATP. Residues Cys-185, Cys-193, Cys-196, and Cys-199 each contribute to the Zn(2+) site.

It belongs to the QueC family. The cofactor is Zn(2+).

The catalysed reaction is 7-carboxy-7-deazaguanine + NH4(+) + ATP = 7-cyano-7-deazaguanine + ADP + phosphate + H2O + H(+). The protein operates within purine metabolism; 7-cyano-7-deazaguanine biosynthesis. Its function is as follows. Catalyzes the ATP-dependent conversion of 7-carboxy-7-deazaguanine (CDG) to 7-cyano-7-deazaguanine (preQ(0)). The polypeptide is 7-cyano-7-deazaguanine synthase (Brucella canis (strain ATCC 23365 / NCTC 10854 / RM-666)).